Here is an 87-residue protein sequence, read N- to C-terminus: Tachykinin-1 (87 aa).

Positions Met1–Ala22 are cleaved as a signal peptide. Residues Asp23–Val37 constitute a propeptide that is removed on maturation. Met49 carries the post-translational modification Methionine amide. The propeptide occupies Ser52–Lys87. The segment at Gln61–Lys87 is disordered. The span at Gly73–Lys87 shows a compositional bias: basic residues.

This sequence belongs to the tachykinin family. As to expression, expressed in the posterior salivary gland and more specifically in the mucus-secreting gland cells.

It is found in the secreted. Functionally, tachykinins are active peptides which excite neurons, evoke behavioral responses, are potent vasodilators and secretagogues, and contract (directly or indirectly) many smooth muscles. In Octopus vulgaris (Common octopus), this protein is Tachykinin-1.